Here is an 84-residue protein sequence, read N- to C-terminus: MAHKKGASSSRNGRDSAAQRLGVKRFGGQLVSAGEIIIRQRGTKFHPGDLVGRGGDDTLFALAAGSVQFGTKRGRKTVSIVPQQ.

Belongs to the bacterial ribosomal protein bL27 family.

In Salinispora tropica (strain ATCC BAA-916 / DSM 44818 / JCM 13857 / NBRC 105044 / CNB-440), this protein is Large ribosomal subunit protein bL27.